Reading from the N-terminus, the 374-residue chain is Probable ethanolamine kinase (374 aa).

Arg93 and Asp252 together coordinate ATP.

The protein belongs to the choline/ethanolamine kinase family.

The catalysed reaction is ethanolamine + ATP = phosphoethanolamine + ADP + H(+). Its pathway is phospholipid metabolism; phosphatidylethanolamine biosynthesis; phosphatidylethanolamine from ethanolamine: step 1/3. Its function is as follows. Involved in phospholipid biosynthesis. Catalyzes the first step in phosphatidylethanolamine biosynthesis. In Arabidopsis thaliana (Mouse-ear cress), this protein is Probable ethanolamine kinase (EMB1187).